A 459-amino-acid chain; its full sequence is Exodeoxyribonuclease 7 large subunit (459 aa).

The protein belongs to the XseA family. As to quaternary structure, heterooligomer composed of large and small subunits.

Its subcellular location is the cytoplasm. It carries out the reaction Exonucleolytic cleavage in either 5'- to 3'- or 3'- to 5'-direction to yield nucleoside 5'-phosphates.. Its function is as follows. Bidirectionally degrades single-stranded DNA into large acid-insoluble oligonucleotides, which are then degraded further into small acid-soluble oligonucleotides. The polypeptide is Exodeoxyribonuclease 7 large subunit (Yersinia pestis bv. Antiqua (strain Antiqua)).